A 179-amino-acid polypeptide reads, in one-letter code: Large ribosomal subunit protein uL5 (179 aa).

It belongs to the universal ribosomal protein uL5 family. In terms of assembly, part of the 50S ribosomal subunit; part of the 5S rRNA/L5/L18/L25 subcomplex. Contacts the 5S rRNA and the P site tRNA. Forms a bridge to the 30S subunit in the 70S ribosome.

Its function is as follows. This is one of the proteins that bind and probably mediate the attachment of the 5S RNA into the large ribosomal subunit, where it forms part of the central protuberance. In the 70S ribosome it contacts protein S13 of the 30S subunit (bridge B1b), connecting the 2 subunits; this bridge is implicated in subunit movement. Contacts the P site tRNA; the 5S rRNA and some of its associated proteins might help stabilize positioning of ribosome-bound tRNAs. This Dehalococcoides mccartyi (strain ATCC BAA-2100 / JCM 16839 / KCTC 5957 / BAV1) protein is Large ribosomal subunit protein uL5.